The following is a 438-amino-acid chain: Polycomb protein eed-B (438 aa).

The segment at 1–70 (MSEASGRAAG…GRKGWGKGKW (70 aa)) is disordered. The span at 40–57 (SIESGTNTERPDTPTNAA) shows a compositional bias: polar residues. 7 WD repeats span residues 88 to 131 (DHNQ…DIRL), 139 to 182 (DADE…CIKH), 185 to 225 (GHGN…LVAI), 231 to 270 (GHRD…MKTA), 301 to 338 (IHRN…DDIE), 356 to 396 (SQCD…PHKA), and 405 to 438 (KCAS…DRLR).

This sequence belongs to the WD repeat ESC family. In terms of assembly, component of the prc2/eed-ezh2 complex. Can interact with ezh2, hdac1 and taf9. Interacts with yy1.

The protein resides in the nucleus. Polycomb group (PcG) protein. Component of the prc2/eed-ezh2 complex, which methylates 'Lys-9' and 'Lys-27' of histone H3, leading to transcriptional repression of the affected target gene. May play a role in neural induction. The sequence is that of Polycomb protein eed-B (eed-b) from Xenopus laevis (African clawed frog).